Consider the following 417-residue polypeptide: MREKVYLKFEEMPKVYYNVLADLPFELDPPLDPETNKPISPEKLLAIFPEPLLEQEVSKERFIPIPEPVLKEYAVYRPTPLVRATFLEEYLRTRTKIYYKYEGVSPTGSHKVNTAIAQAYYNKIAGTKTLVTETGAGQWGSALSYAGQKFGLDVRIFMVKVSYQQKPFRKILMNLFGGDVQPSPSNLTQIGRQFSEDHPGTLGIAISEAIHTVLNEKDAKYSLGSVLNHVLLHQTIIGLEMKKQLEIIGIKPDIIVACHGGGSNFGGSALPFIPDVLSGKNIKIVAVEPESCPSLTKGEYRYDFGDTAGLTPLMKMYTLGKDFVPPAIHAGGLRYHGASPIVSKLYHERLIDAASVTQEEVFEAGKLFAKLEGIVPAPESAHAIAYVIKEAKKGDKESIVFTLSGHGYFDLNAYINQ.

N6-(pyridoxal phosphate)lysine is present on lysine 111.

Belongs to the TrpB family. As to quaternary structure, tetramer of two alpha and two beta chains. Requires pyridoxal 5'-phosphate as cofactor.

The catalysed reaction is (1S,2R)-1-C-(indol-3-yl)glycerol 3-phosphate + L-serine = D-glyceraldehyde 3-phosphate + L-tryptophan + H2O. It participates in amino-acid biosynthesis; L-tryptophan biosynthesis; L-tryptophan from chorismate: step 5/5. Its function is as follows. The beta subunit is responsible for the synthesis of L-tryptophan from indole and L-serine. This is Tryptophan synthase beta chain from Fervidobacterium nodosum (strain ATCC 35602 / DSM 5306 / Rt17-B1).